The sequence spans 143 residues: Large ribosomal subunit protein uL11 (143 aa).

The protein belongs to the universal ribosomal protein uL11 family. In terms of assembly, part of the ribosomal stalk of the 50S ribosomal subunit. Interacts with L10 and the large rRNA to form the base of the stalk. L10 forms an elongated spine to which L12 dimers bind in a sequential fashion forming a multimeric L10(L12)X complex. Post-translationally, one or more lysine residues are methylated.

Functionally, forms part of the ribosomal stalk which helps the ribosome interact with GTP-bound translation factors. This Cupriavidus pinatubonensis (strain JMP 134 / LMG 1197) (Cupriavidus necator (strain JMP 134)) protein is Large ribosomal subunit protein uL11.